The following is a 96-amino-acid chain: MAEVEETLKRLQSQKGVQGIIVVNTEGIPIKSTMDNPTTTQYANLMHNFILKARSTVREIDPQNDLTFLRIRSKKNEIMVAPDKDYFLIVIQNPTE.

A2 bears the N-acetylalanine mark.

The protein belongs to the GAMAD family. In terms of assembly, homodimer. The cytoplasmic dynein 1 complex consists of two catalytic heavy chains (HCs) and a number of non-catalytic subunits presented by intermediate chains (ICs), light intermediate chains (LICs) and light chains (LCs); the composition seems to vary in respect to the IC, LIC and LC composition. The heavy chain homodimer serves as a scaffold for the probable homodimeric assembly of the respective non-catalytic subunits. The ICs and LICs bind directly to the HC dimer and the LCs assemble on the IC dimer. Interacts with DYNLRB2. Interacts with DYNC1I1 and DYNC1I2. Interacts with RAB6A isoform 1 (GTP-bound); the interaction is direct. Interacts with RAB6A isoform 2 (GDP-bound); the interaction is direct. Interacts with RAB6B (GDP-bound).

The protein resides in the cytoplasm. The protein localises to the cytoskeleton. Functionally, acts as one of several non-catalytic accessory components of the cytoplasmic dynein 1 complex that are thought to be involved in linking dynein to cargos and to adapter proteins that regulate dynein function. Cytoplasmic dynein 1 acts as a motor for the intracellular retrograde motility of vesicles and organelles along microtubules. The polypeptide is Dynein light chain roadblock-type 1 (Dynlrb1) (Mus musculus (Mouse)).